A 481-amino-acid polypeptide reads, in one-letter code: Proline--tRNA ligase (481 aa).

Belongs to the class-II aminoacyl-tRNA synthetase family. ProS type 3 subfamily. Homodimer.

It localises to the cytoplasm. The enzyme catalyses tRNA(Pro) + L-proline + ATP = L-prolyl-tRNA(Pro) + AMP + diphosphate. Functionally, catalyzes the attachment of proline to tRNA(Pro) in a two-step reaction: proline is first activated by ATP to form Pro-AMP and then transferred to the acceptor end of tRNA(Pro). This Chlorobaculum tepidum (strain ATCC 49652 / DSM 12025 / NBRC 103806 / TLS) (Chlorobium tepidum) protein is Proline--tRNA ligase.